The primary structure comprises 283 residues: Endochitinase At2g43620 (283 aa).

An N-terminal signal peptide occupies residues 1–28; the sequence is MATLRAMLKNAFILFLFTLTIMAKTVFS. One can recognise a Chitin-binding type-1 domain in the interval 29–66; the sequence is QQCGTTGCAANLCCSRYGYCGTTDAYCGTGCRSGPCSS. 4 disulfides stabilise this stretch: Cys31–Cys42, Cys36–Cys48, Cys41–Cys55, and Cys59–Cys64. The interval 88 to 283 is catalytic; the sequence is DTIENVVTPA…GITPGANLSC (196 aa). Catalysis depends on Glu150, which acts as the Proton donor. Asn280 carries N-linked (GlcNAc...) asparagine glycosylation.

The protein belongs to the glycosyl hydrolase 19 family. Chitinase class I subfamily.

It carries out the reaction Random endo-hydrolysis of N-acetyl-beta-D-glucosaminide (1-&gt;4)-beta-linkages in chitin and chitodextrins.. In Arabidopsis thaliana (Mouse-ear cress), this protein is Endochitinase At2g43620.